Consider the following 119-residue polypeptide: HTH-type transcriptional regulator SarX (119 aa).

A DNA-binding region (H-T-H motif) is located at residues Leu-55–Glu-78.

The protein belongs to the SarA family.

It is found in the cytoplasm. Involved in the regulation of virulence genes. Acts as a repressor of the agr locus and consequently targets genes regulated by the agr system such as sspA, hla and hlb. Binds directly to the agr promoter region. This chain is HTH-type transcriptional regulator SarX (sarX), found in Staphylococcus aureus (strain bovine RF122 / ET3-1).